Here is a 197-residue protein sequence, read N- to C-terminus: MYB-like transcription factor EOBII (197 aa).

2 consecutive HTH myb-type domains span residues 10–62 (DAEV…LNYL) and 63–117 (RPDV…QKHI). DNA-binding regions (H-T-H motif) lie at residues 38–62 (WNSLAKSAGLKRTGKSCRLRWLNYL) and 90–113 (WSKIAKHLPGRTDNEIKNYWRTRI). A disordered region spans residues 125–158 (GQAASSEQNDHQEACTSQMSNGPNDNTIDQTYSP). Positions 138–158 (ACTSQMSNGPNDNTIDQTYSP) are enriched in polar residues.

As to expression, specifically expressed in flowers, mostly in stigmas, petal tubes and petal limbs, and, to a lower extent, in anthers and stamen. Also present at low levels in roots, stems, leaves and sepals.

It is found in the nucleus. Functionally, MYB-type transcription factor controlling the production of volatile organic compounds (VOCs), including floral volatile benzenoids and phenylpropanoids (FVBP), in flowers of fragrant cultivars (e.g. cv. Mitchell and cv. V26) by regulating the expression of ODO1 and EOBI, key regulators of the shikimate pathway, and of several biosynthetic floral scent-related genes including IGS, PAL2 and CFAT. This scent, mostly produced in the evening and night by the petals, attracts the pollinators (e.g. the night-active hawkmoth pollinator Manduca sexta). Binds to and activates the ODO1 and EOBI promoters via MYB binding sites (MBS) 5'-AAACCTAAT-3' and 5'-CTAACT-3'. Regulates the promoters of IGS1, CFAT and PAL2. Controls flowers petal opening by modulating a global transcriptomic switch. The polypeptide is MYB-like transcription factor EOBII (Petunia hybrida (Petunia)).